The chain runs to 579 residues: Mitochondrial distribution and morphology protein 31 (579 aa).

The N-terminal 47 residues, 1–47 (MSLFTRPFLRSPRQFSVARYVYWARSPALRSNLRIPSIAAASLRAYS), are a transit peptide targeting the mitochondrion. At 48-114 (NESKTGRDAP…SDDISAFISW (67 aa)) the chain is on the mitochondrial matrix side. The helical transmembrane segment at 115 to 135 (ILVSNIFIFIFWTTTFVSLIL) threads the bilayer. Residues 136–558 (YLINTVFAQE…DEKRTLRLRR (423 aa)) lie on the Mitochondrial intermembrane side of the membrane. Residues 559–578 (VGFWSLQLILQVILMSLGAI) form a helical membrane-spanning segment. Residue A579 is a topological domain, mitochondrial matrix.

Belongs to the MDM31/MDM32 family. As to quaternary structure, interacts with MDM32. Participates in a complex of about 600 kDa.

The protein localises to the mitochondrion inner membrane. Its function is as follows. Involved in the organization of the mitochondrial membranes and the global structure of the mitochondria. Also required for mitochondrial distribution and mobility as well as for the maintenance of mitochondrial DNA nucleoids structures. The polypeptide is Mitochondrial distribution and morphology protein 31 (MDM31) (Saccharomyces cerevisiae (strain ATCC 204508 / S288c) (Baker's yeast)).